The primary structure comprises 581 residues: Sodium/hydrogen exchanger 8 (581 aa).

A run of 11 helical transmembrane segments spans residues 60 to 80, 84 to 104, 123 to 143, 156 to 176, 191 to 211, 264 to 284, 311 to 331, 354 to 374, 379 to 399, 417 to 437, and 451 to 471; these read MTIF…HLLI, LHFL…GAVI, PNMF…YSLH, LFAV…IYFL, FAFG…IFNA, FLKM…ISAL, GLAE…GIVM, VAFL…FSFP, ISFV…NIFP, MFIM…SLHL, and TTIV…MPLI. Position 510 is a phosphothreonine (Thr510). Ser571 and Ser573 each carry phosphoserine.

It belongs to the monovalent cation:proton antiporter 1 (CPA1) transporter (TC 2.A.36) family. In terms of tissue distribution, ubiquitous. Strongly expressed in skeletal muscle and kidney. Detected throughout the entire gastrointestinal tract, with high expression detected in stomach, duodenum and ascending colon.

The protein localises to the golgi apparatus membrane. Its subcellular location is the golgi apparatus. It localises to the trans-Golgi network membrane. It is found in the endosome. The protein resides in the multivesicular body membrane. The protein localises to the apical cell membrane. Its subcellular location is the cytoplasmic vesicle. It localises to the secretory vesicle. It is found in the acrosome. It catalyses the reaction Na(+)(in) + H(+)(out) = Na(+)(out) + H(+)(in). With respect to regulation, HOE642 inhibits SLC9A8 activity. In terms of biological role, na(+)/H(+) antiporter. Mediates the electoneutral exchange of intracellular H(+) ions for extracellular Na(+) in 1:1 stoichiometry. Acts as an Na(+)/H(+) exchanger in the trans-Golgi. Contributes to the regulation of pH regulation of Golgi apparatus, and consequently, in protein trafficking and endosomal morphology. In germ cells, plays a crucial role in acrosome biogenesis and sperm development, probably by playing a role in the fusion of the Golgi-derived vesicles that form the acrosomal cap. Can also be active at the cell surface of specialized cells. In the small intestine, at the cell membrane, plays a major physiological role in transepithelial absorption of Na(+) and regulates intracellular pH homeostasis of intestinal epithelial cells. Acts as an important regulator of mucosal integrity in the intestine and in the stomach, could mediate the pH fluctuation necessary for mucin exocytosis or assist membrane trafficking of other proteins. Plays a role in photoreceptor survival and in the maintenance of intracellular pH homeostasis in retinal pigment epithelium (RPE cells). In Homo sapiens (Human), this protein is Sodium/hydrogen exchanger 8.